The chain runs to 2430 residues: Transcription factor HIVEP2 (2430 aa).

Residues 1–127 (MDTGDTALGQ…SLEGPPWLFP (127 aa)) form a disordered region. Polar residues-rich tracts occupy residues 11 to 22 (KATSRSGETDSV) and 96 to 110 (HSLS…QGMT). 2 C2H2-type zinc fingers span residues 189 to 211 (YICP…IRSH) and 217 to 239 (YPCI…RKSH). 3 disordered regions span residues 271 to 302 (IHSD…PPVP), 374 to 418 (SEKK…NTNA), and 744 to 995 (AHGH…SGKH). The span at 381-418 (SEPSLNLLSPHSKGSTDSGYFSRSESAEQQISPPNTNA) shows a compositional bias: polar residues. Composition is skewed to basic and acidic residues over residues 744-753 (AHGHSDRLDP) and 775-784 (DPDKMTDLGK). The span at 792–804 (SVIQHTNSLSRPN) shows a compositional bias: polar residues. Serine 811 bears the Phosphoserine mark. The span at 853 to 863 (SKPTPSQQVPQ) shows a compositional bias: polar residues. Residues 884–908 (RVTEEPDKPEKEKEAPTKEPEKPVE) show a composition bias toward basic and acidic residues. The short motif at 929 to 935 (PKKKRLR) is the Nuclear localization signal element. Phosphoserine is present on residues serine 942, serine 947, serine 1040, serine 1431, and serine 1435. Positions 944 to 974 (GESSFESTGTGLSRSPSQESNLSHSSSFSMS) are enriched in low complexity. The tract at residues 1472 to 1584 (KKGLSRPQKP…GGQQEEEGKA (113 aa)) is disordered. Low complexity-rich tracts occupy residues 1499–1520 (SRSS…SASG) and 1560–1569 (SDMSMSPQSS). 2 C2H2-type zinc fingers span residues 1783–1805 (YICE…IRTH) and 1811–1835 (YVCK…SKAH). Disordered stretches follow at residues 1848–1931 (SVDD…SSLP) and 1986–2117 (FQSK…SPRR). Over residues 1850 to 1860 (DDTETEEAENM) the composition is skewed to acidic residues. A compositionally biased stretch (basic and acidic residues) spans 1861–1871 (EELHKTSEKHS). The segment covering 1883 to 1909 (DAEESDGEDGDDNDDDDEDDDDFDDQG) has biased composition (acidic residues). The segment covering 1991-2001 (TDSEPDKDRLD) has biased composition (basic and acidic residues). Residues 2013–2037 (SSEPSSSPRDFSPSSYRSSPGYDSS) are compositionally biased toward low complexity. A run of 10 repeats spans residues 2037 to 2040 (SPCR), 2043 to 2046 (SPKR), 2055 to 2058 (SPRR), 2067 to 2070 (SPMR), 2073 to 2076 (SPRK), 2090 to 2093 (SPRR), 2096 to 2099 (SPRR), 2102 to 2105 (SPGK), 2114 to 2117 (SPRR), and 2129 to 2132 (SPRR). The interval 2037–2132 (SPCRDNSPKR…TTIRAPSPRR (96 aa)) is 10 X 4 AA tandem repeats of S-P-[RGMKC]-[RK]. Positions 2062-2085 (PRRDLSPMRHLSPRKEAALRREMS) are enriched in basic and acidic residues. Serine 2102 is subject to Phosphoserine. Positions 2107–2116 (ITARRDLSPR) are enriched in basic and acidic residues. 3 disordered regions span residues 2226-2252 (PALS…GAPG), 2268-2309 (KQAP…QEEN), and 2352-2430 (SIRH…NQLH). Low complexity predominate over residues 2271–2289 (PQVLQSSGLPSSPSSPRLL). 2 positions are modified to phosphoserine: serine 2281 and serine 2285. Over residues 2291 to 2301 (KQSTSEDSLNS) the composition is skewed to polar residues. Residues 2371–2380 (PDLHDGEKDT) show a composition bias toward basic and acidic residues. Positions 2406–2417 (FQSSKELSLSTE) are enriched in polar residues. A phosphoserine mark is found at serine 2413 and serine 2415.

In terms of assembly, interacts with TCF4. As to expression, expressed in heart, lung, skeletal muscle and liver. In the brain expressed in cerebral cortex, hippocampus, corpora amygdala and cerebellar cortex.

It localises to the nucleus. Functionally, specifically binds to the DNA sequence 5'-GGGACTTTCC-3' which is found in the enhancer elements of numerous viral promoters such as those of SV40, CMV, or HIV1. In addition, related sequences are found in the enhancer elements of a number of cellular promoters, including those of the class I MHC, interleukin-2 receptor, somatostatin receptor II, and interferon-beta genes. It may act in T-cell activation. The chain is Transcription factor HIVEP2 (Hivep2) from Mus musculus (Mouse).